The following is an 829-amino-acid chain: Sodium/hydrogen exchanger 3 (829 aa).

Residues 1–26 (MWHRALGPGWKLLLALALTSLQGARG) form the signal peptide. Over 27 to 46 (AEEEPSSDGSFQVVTFKWHH) the chain is Extracellular. The helical transmembrane segment at 47–69 (VQDPYIIALWILVASLAKIVFHL) threads the bilayer. The Cytoplasmic portion of the chain corresponds to 70–77 (SHKVTSIV). The helical transmembrane segment at 78–97 (PESALLIVLGLVLGGIVWAA) threads the bilayer. The Extracellular portion of the chain corresponds to 98–106 (DHIASFTLT). The helical transmembrane segment at 107–124 (PTLFFFYLLPPIVLDAGY) threads the bilayer. The Cytoplasmic segment spans residues 125–127 (FMP). The chain crosses the membrane as a helical span at residues 128–163 (NRLFFGNLGTILLYAVIGTIWNAATTGLSLYGVFLS). Residues Gly-133, Gly-136, and Thr-137 each contribute to the a 1,2-diacyl-sn-glycero-3-phospho-(1D-myo-inositol) site. The Extracellular segment spans residues 164 to 176 (GLMGELKIGLLDF). A helical transmembrane segment spans residues 177-198 (LLFGSLIAAVDPVAVLAVFEEV). At 199–200 (HV) the chain is on the cytoplasmic side. The chain crosses the membrane as a helical span at residues 201–232 (NEVLFIIVFGESLLNDAVTVVLYNVFESFVTL). The Extracellular portion of the chain corresponds to 233–239 (GGDAVTG). The chain crosses the membrane as a helical span at residues 240–274 (VDCVKGIVSFFVVSLGGTLVGVIFAFLLSLVTRFT). The Cytoplasmic segment spans residues 275–276 (KH). Residues 277–299 (VRIIEPGFVFVISYLSYLTSEML) traverse the membrane as a helical segment. At 300–301 (SL) the chain is on the extracellular side. The chain crosses the membrane as a helical span at residues 302 to 318 (SSILAITFCGICCQKYV). Topologically, residues 319–325 (KANISEQ) are cytoplasmic. The helical transmembrane segment at 326–354 (SATTVRYTMKMLASGAETIIFMFLGISAV) threads the bilayer. At 355-362 (NPDIWTWN) the chain is on the extracellular side. The chain crosses the membrane as a helical span at residues 363–384 (TAFVLLTLVFISVYRAIGVVLQ). Topologically, residues 385–397 (TWILNRYRMVQLE) are cytoplasmic. Met-393 contacts a 1,2-diacyl-sn-glycero-3-phospho-(1D-myo-inositol). The chain crosses the membrane as a helical span at residues 398-421 (TIDQVVMSYGGLRGAVAYALVVLL). The Extracellular segment spans residues 422–428 (DEKKVKE). A helical membrane pass occupies residues 429–462 (KNLFVSTTLIVVFFTVIFQGLTIKPLVQWLKVKR). Residues 463 to 829 (SEHREPKLNE…QPAAPESTHM (367 aa)) are Cytoplasmic-facing. Positions 492, 493, and 495 each coordinate a 1,2-diacyl-sn-glycero-3-phospho-(1D-myo-inositol). Ser-550 and Ser-558 each carry phosphoserine. Residues 571 to 585 (RPSTVEASVSYFLRE) form an interaction with EZR region. The interaction with NHERF4 stretch occupies residues 586-663 (NVSAVCLDMQ…RKRLESFKSA (78 aa)). The interval 587–691 (VSAVCLDMQS…AQKRRNSSIP (105 aa)) is interaction with AHCYL1. Residues Ser-588 and Ser-603 each carry the phosphoserine modification. The residue at position 659 (Ser-659) is a Phosphoserine; by SGK1. The segment covering 677–687 (YKRERAQKRRN) has biased composition (basic residues). Residues 677 to 696 (YKRERAQKRRNSSIPNGKLP) form a disordered region. Residues Ser-714, Ser-805, and Ser-808 each carry the phosphoserine modification.

The protein belongs to the monovalent cation:proton antiporter 1 (CPA1) transporter (TC 2.A.36) family. As to quaternary structure, homodimer. Found in the forms of complex and dynamic macromolecular complexes. Binds NHERF1 and NHERF2. Interacts with CHP1; this interaction increases trafficking and activity of SLC9A3 at the plasma membrane. Interacts with CHP2 and SHANK2. Interacts with PDZK1 (via C-terminal PDZ domain). Interacts with NHERF4 and interactions decrease in response to elevated calcium ion levels. Interacts with AHCYL1; the interaction is required for SLC9A3 activity. Interacts with EZR; interaction targets SLC9A3 to the apical membrane. Interacts with SNX27 (via PDZ domains); directs SLC9A3 membrane insertion from early endosomes to the plasma membrane. In terms of processing, phosphorylated by PKA, which inhibits activity. Phosphorylation at Ser-659 by SGK1 is associated with increased abundance at the cell membrane. Phosphorylation at Ser-714 by CSNK2A1 regulates SLC9A3 activity through the formation of multiple signaling complexes.

The protein resides in the apical cell membrane. It is found in the cell membrane. Its subcellular location is the recycling endosome membrane. It localises to the early endosome membrane. It carries out the reaction Na(+)(in) + H(+)(out) = Na(+)(out) + H(+)(in). With respect to regulation, seems to switch between active and inactive modes in response to various stimuli. Activated directly or indirectly by membrane phosphatidylinositol (PIs). Regulated by a variety of auxiliary proteins, which facilitate the maturation, cell surface expression and function of the transporter. Inhibited specifically by the drug tenapanor. In terms of biological role, plasma membrane Na(+)/H(+) antiporter. Exchanges intracellular H(+) ions for extracellular Na(+) in 1:1 stoichiometry, playing a key role in salt and fluid absorption and pH homeostasis. Major apical Na(+)/H(+) exchanger in kidney and intestine playing an important role in renal and intestine Na(+) absorption and blood pressure regulation. The sequence is that of Sodium/hydrogen exchanger 3 from Mus musculus (Mouse).